The following is a 527-amino-acid chain: Catalase (527 aa).

Ala2 bears the N-acetylalanine mark. Ser9 is modified (phosphoserine). Residues His75 and Asn148 contribute to the active site. His194, Ser201, Arg203, and Asn213 together coordinate NADP(+). At Lys221 the chain carries N6-succinyllysine. An N6-acetyllysine modification is found at Lys233. NADP(+) contacts are provided by Lys237, Trp303, His305, and Lys306. An N6-acetyllysine; alternate modification is found at Lys306. Lys306 carries the post-translational modification N6-succinyllysine; alternate. Residue Tyr358 participates in heme binding. Residues Ser417 and Ser422 each carry the phosphoserine modification. Lys480 carries the post-translational modification N6-acetyllysine; alternate. An N6-succinyllysine; alternate modification is found at Lys480. Lys499 bears the N6-acetyllysine mark. Position 511 is a phosphothreonine (Thr511). Ser515 and Ser517 each carry phosphoserine. A Microbody targeting signal; atypical motif is present at residues 524-527 (KANL).

The protein belongs to the catalase family. As to quaternary structure, homotetramer. Interacts (via microbody targeting signal) with PEX5, monomeric form interacts with PEX5, leading to its translocation into peroxisomes. Heme is required as a cofactor. The cofactor is NADP(+).

It localises to the peroxisome matrix. The catalysed reaction is 2 H2O2 = O2 + 2 H2O. Functionally, catalyzes the degradation of hydrogen peroxide (H(2)O(2)) generated by peroxisomal oxidases to water and oxygen, thereby protecting cells from the toxic effects of hydrogen peroxide. Promotes growth of cells including T-cells, B-cells, myeloid leukemia cells, melanoma cells, mastocytoma cells and normal and transformed fibroblast cells. This Homo sapiens (Human) protein is Catalase (CAT).